The following is a 168-amino-acid chain: Photosystem I assembly protein Ycf3 (168 aa).

TPR repeat units follow at residues 35–68 (AFTYYRDGMSAQSEGNYAEALQNYYEAMRLEIDP), 72–105 (SYILYNIGLIHTSNGEHTKALEYYFRALERNPFL), and 120–153 (GEQAIQQGDSEIAEAWFDQAAEYWKQAIALTPGN).

It belongs to the Ycf3 family.

The protein resides in the plastid. The protein localises to the chloroplast thylakoid membrane. In terms of biological role, essential for the assembly of the photosystem I (PSI) complex. May act as a chaperone-like factor to guide the assembly of the PSI subunits. In Solanum bulbocastanum (Wild potato), this protein is Photosystem I assembly protein Ycf3.